The chain runs to 121 residues: Ubiquitin-related modifier 1 (121 aa).

Gly121 carries the 1-thioglycine modification. Residue Gly121 forms a Glycyl lysine isopeptide (Gly-Lys) (interchain with K-? in acceptor proteins) linkage.

It belongs to the URM1 family. Post-translationally, C-terminal thiocarboxylation occurs in 2 steps, it is first acyl-adenylated (-COAMP) via the hesA/moeB/thiF part of UBA4, then thiocarboxylated (-COSH) via the rhodanese domain of UBA4.

The protein localises to the cytoplasm. Its pathway is tRNA modification; 5-methoxycarbonylmethyl-2-thiouridine-tRNA biosynthesis. Its function is as follows. Acts as a sulfur carrier required for 2-thiolation of mcm(5)S(2)U at tRNA wobble positions of cytosolic tRNA(Lys), tRNA(Glu) and tRNA(Gln). Serves as sulfur donor in tRNA 2-thiolation reaction by being thiocarboxylated (-COSH) at its C-terminus by the MOCS3 homolog UBA4. The sulfur is then transferred to tRNA to form 2-thiolation of mcm(5)S(2)U. Prior mcm(5) tRNA modification by the elongator complex is required for 2-thiolation. Also acts as a ubiquitin-like protein (UBL) that is covalently conjugated via an isopeptide bond to lysine residues of target proteins such as AHP1. The thiocarboxylated form serves as substrate for conjugation and oxidative stress specifically induces the formation of UBL-protein conjugates. The polypeptide is Ubiquitin-related modifier 1 (Ajellomyces capsulatus (strain NAm1 / WU24) (Darling's disease fungus)).